The following is a 2216-amino-acid chain: RNA-directed RNA polymerase L (2216 aa).

Residues 26–289 (KTSFLSQVNL…ETRTAMLDER (264 aa)) are endonuclease. Residues Glu-51, Asp-88, and Glu-101 each coordinate Mn(2+). Lys-114 is a catalytic residue. One can recognise a RdRp catalytic domain in the interval 1167–1364 (LDMKCVVRLS…YLSSKFNKFV (198 aa)). Mg(2+) is bound at residue Asp-1323.

Belongs to the Bunyavirales RNA polymerase family. In terms of assembly, homomultimer; the oligomeric structure is essential for the polymerase activity. Interacts with nucleoprotein N. Interacts with protein Z; this interaction inhibits viral transcription and replication, Z partially blocks the product exit tunnel for the releasing nascent RNA product. The cofactor is Mn(2+). Requires Mg(2+) as cofactor.

The protein localises to the virion. It localises to the host cytoplasm. It catalyses the reaction RNA(n) + a ribonucleoside 5'-triphosphate = RNA(n+1) + diphosphate. Functionally, RNA-dependent RNA polymerase, which is responsible for the replication and transcription of the viral RNA genome using antigenomic RNA as an intermediate. During transcription, synthesizes subgenomic RNAs and assures their capping by a cap-snatching mechanism, which involves the endonuclease activity cleaving the host capped pre-mRNAs. These short capped RNAs are then used as primers for viral transcription. The 3'-end of subgenomic mRNAs molecules are heterogeneous and not polyadenylated. The replicase function is to direct synthesis of antigenomic and genomic RNA which are encapsidated and non capped. As a consequence of the use of the same enzyme for both transcription and replication, these mechanisms need to be well coordinated. These processes may be regulated by proteins N and Z in a dose-dependent manner. Z protein inhibits the viral polymerase L und thus the viral transcription and RNA synthesis. The protein is RNA-directed RNA polymerase L of Bear Canyon mammarenavirus (isolate Mouse/United States/AV A0070039/2000) (BCNV).